A 223-amino-acid polypeptide reads, in one-letter code: Endonuclease V (223 aa).

The Mg(2+) site is built by Asp-35 and Asp-103.

It belongs to the endonuclease V family. Mg(2+) is required as a cofactor.

It is found in the cytoplasm. The enzyme catalyses Endonucleolytic cleavage at apurinic or apyrimidinic sites to products with a 5'-phosphate.. Its function is as follows. DNA repair enzyme involved in the repair of deaminated bases. Selectively cleaves double-stranded DNA at the second phosphodiester bond 3' to a deoxyinosine leaving behind the intact lesion on the nicked DNA. The chain is Endonuclease V from Escherichia coli O139:H28 (strain E24377A / ETEC).